A 331-amino-acid polypeptide reads, in one-letter code: PIN2/TERF1-interacting telomerase inhibitor 1 (331 aa).

Disordered stretches follow at residues 1–28 (MSMLAERRRKQKWAVDPRNTAWSNDDSK), 156–175 (AQDGCSNSTADEADTSLTTT), and 197–331 (SKSQ…KVSR). The G-patch domain occupies 26–72 (DSKFGQKMLEKMGWSKGKGLGAQEQGATEHIKVKVKNNHLGLGATNN). Residue Ser-233 is modified to Phosphoserine. Residues 236 to 246 (HKAKRHKKKKR) are compositionally biased toward basic residues. Over residues 247–261 (VEAERGPAAKKRDQV) the composition is skewed to basic and acidic residues. The tract at residues 254–328 (AAKKRDQVEL…DSAPVKKKKK (75 aa)) is telomerase inhibitory domain (TID). Phosphoserine is present on residues Ser-269, Ser-274, and Ser-277. The TBM motif lies at 291 to 301 (QDDVPKPRKRR). Basic residues predominate over residues 297–306 (PRKRRAKKTL).

The protein belongs to the PINX1 family. In terms of assembly, interacts with MCRS1, TERT, TERF1, NCL/nucleolin, and the telomerase RNA.

It is found in the nucleus. The protein localises to the nucleolus. The protein resides in the chromosome. Its subcellular location is the telomere. It localises to the centromere. It is found in the kinetochore. In terms of biological role, microtubule-binding protein essential for faithful chromosome segregation. Mediates TRF1 and TERT accumulation in nucleolus and enhances TRF1 binding to telomeres. Inhibits telomerase activity. May inhibit cell proliferation and act as tumor suppressor. The polypeptide is PIN2/TERF1-interacting telomerase inhibitor 1 (Rattus norvegicus (Rat)).